Consider the following 120-residue polypeptide: Chaperonin GroEL (120 aa).

Asp-23–Thr-27 serves as a coordination point for ATP.

It belongs to the chaperonin (HSP60) family. Forms a cylinder of 14 subunits composed of two heptameric rings stacked back-to-back. Interacts with the co-chaperonin GroES.

The protein localises to the cytoplasm. It carries out the reaction ATP + H2O + a folded polypeptide = ADP + phosphate + an unfolded polypeptide.. Its function is as follows. Together with its co-chaperonin GroES, plays an essential role in assisting protein folding. The GroEL-GroES system forms a nano-cage that allows encapsulation of the non-native substrate proteins and provides a physical environment optimized to promote and accelerate protein folding. This is Chaperonin GroEL from Mycolicibacterium pulveris (Mycobacterium pulveris).